Reading from the N-terminus, the 322-residue chain is uncharacterized protein (322 aa).

The region spanning 34 to 286 (KFKQKIFKIP…QRLSKDKVPE (253 aa)) is the Radical SAM core domain. [4Fe-4S] cluster-binding residues include Cys50, Cys58, and Cys61.

This sequence belongs to the radical SAM superfamily. The cofactor is [4Fe-4S] cluster.

This is an uncharacterized protein from Methanocaldococcus jannaschii (strain ATCC 43067 / DSM 2661 / JAL-1 / JCM 10045 / NBRC 100440) (Methanococcus jannaschii).